A 126-amino-acid polypeptide reads, in one-letter code: Fluoride-specific ion channel FluC (126 aa).

The next 4 membrane-spanning stretches (helical) occupy residues 3 to 23 (PYLL…RFLI), 37 to 57 (VGTL…ALYF), 68 to 88 (LVIT…LETV), and 101 to 121 (TNIT…MMLF). Na(+)-binding residues include G75 and T78.

Belongs to the fluoride channel Fluc/FEX (TC 1.A.43) family.

It localises to the cell inner membrane. It carries out the reaction fluoride(in) = fluoride(out). Na(+) is not transported, but it plays an essential structural role and its presence is essential for fluoride channel function. Fluoride-specific ion channel. Important for reducing fluoride concentration in the cell, thus reducing its toxicity. The protein is Fluoride-specific ion channel FluC of Sulfurovum sp. (strain NBC37-1).